The chain runs to 472 residues: Calcitonin gene-related peptide type 1 receptor (472 aa).

An N-terminal signal peptide occupies residues 1–28 (MGLLLRSALFKYIIIVLIMLNLRGYVLA). Topologically, residues 29-149 (EQEQGSQIPL…FTHEKVKTAL (121 aa)) are extracellular. Intrachain disulfides connect Cys-58/Cys-84, Cys-75/Cys-115, and Cys-98/Cys-137. N-linked (GlcNAc...) asparagine glycosylation is found at Asn-76, Asn-128, and Asn-133. Residues 150-174 (NLYYLTIIGHGLSIASLLISLGIFF) form a helical membrane-spanning segment. Residues 175–185 (YFKNLSCQRIT) are Cytoplasmic-facing. The chain crosses the membrane as a helical span at residues 186–208 (LHKNLFFSFVCNSIITIISLSAV). The Extracellular portion of the chain corresponds to 209 to 219 (ANNQALVATNP). A helical membrane pass occupies residues 220 to 248 (VSCKISQFIHLYLMGCNYFWMLCEGIYLH). Residues 249-262 (TLIVVAVFAEKQHL) are Cytoplasmic-facing. Residues 263-283 (MWYYLLGWGFPLIPACIHAVA) form a helical membrane-spanning segment. The Extracellular segment spans residues 284–299 (RSLYYNDNCWISSETH). A helical membrane pass occupies residues 300 to 324 (LLYIIHGPICAALLVNLFFLLNIVR). The Cytoplasmic portion of the chain corresponds to 325 to 339 (VLITKLKVTHQAESN). A helical membrane pass occupies residues 340 to 361 (LYMKAVRATLILVPLLGIEFVL). Over 362 to 376 (FPWKPEGRIAEEIYD) the chain is Extracellular. Residues 377-397 (YVMHILMHYQGLLVATIFCFF) form a helical membrane-spanning segment. Residues 398–472 (NGEVQAVLKR…VFFKTEKQYM (75 aa)) are Cytoplasmic-facing.

This sequence belongs to the G-protein coupled receptor 2 family.

It is found in the cell membrane. May function as G protein-coupled receptor for calcitonin-gene-related peptides and adrenomedullin. Specificity may be modulated by accessory proteins. May activate cAMP-dependent pathway. The chain is Calcitonin gene-related peptide type 1 receptor (calcrl) from Xenopus tropicalis (Western clawed frog).